Consider the following 490-residue polypeptide: Cytochrome P450 2C12, female-specific (490 aa).

Residue Cys-435 participates in heme binding.

It belongs to the cytochrome P450 family. Requires heme as cofactor.

It is found in the endoplasmic reticulum membrane. The protein localises to the microsome membrane. It carries out the reaction an organic molecule + reduced [NADPH--hemoprotein reductase] + O2 = an alcohol + oxidized [NADPH--hemoprotein reductase] + H2O + H(+). This P450 is active in 15-beta-hydroxylation of steroid sulfates. The sequence is that of Cytochrome P450 2C12, female-specific (Cyp2c12) from Rattus norvegicus (Rat).